We begin with the raw amino-acid sequence, 131 residues long: Large ribosomal subunit protein bL17 (131 aa).

It belongs to the bacterial ribosomal protein bL17 family. In terms of assembly, part of the 50S ribosomal subunit. Contacts protein L32.

The protein is Large ribosomal subunit protein bL17 of Shewanella violacea (strain JCM 10179 / CIP 106290 / LMG 19151 / DSS12).